Here is a 476-residue protein sequence, read N- to C-terminus: Glutamate--tRNA ligase 1 (476 aa).

The short motif at 9–19 is the 'HIGH' region element; the sequence is PSPTGFLHIGG. Residues 238-242 carry the 'KMSKS' region motif; that stretch reads KLSKR. Lys241 lines the ATP pocket.

It belongs to the class-I aminoacyl-tRNA synthetase family. Glutamate--tRNA ligase type 1 subfamily. As to quaternary structure, monomer.

The protein resides in the cytoplasm. It catalyses the reaction tRNA(Glu) + L-glutamate + ATP = L-glutamyl-tRNA(Glu) + AMP + diphosphate. Its function is as follows. Catalyzes the attachment of glutamate to tRNA(Glu) in a two-step reaction: glutamate is first activated by ATP to form Glu-AMP and then transferred to the acceptor end of tRNA(Glu). This Bartonella bacilliformis (strain ATCC 35685 / KC583 / Herrer 020/F12,63) protein is Glutamate--tRNA ligase 1.